The chain runs to 120 residues: Small ribosomal subunit protein uS13 (120 aa).

Residues 93–120 (RRGLPCRGQKTKTNARTRKGKRKTVGAA) are disordered.

Belongs to the universal ribosomal protein uS13 family. As to quaternary structure, part of the 30S ribosomal subunit. Forms a loose heterodimer with protein S19. Forms two bridges to the 50S subunit in the 70S ribosome.

Located at the top of the head of the 30S subunit, it contacts several helices of the 16S rRNA. In the 70S ribosome it contacts the 23S rRNA (bridge B1a) and protein L5 of the 50S subunit (bridge B1b), connecting the 2 subunits; these bridges are implicated in subunit movement. Contacts the tRNAs in the A and P-sites. This Sulfurimonas denitrificans (strain ATCC 33889 / DSM 1251) (Thiomicrospira denitrificans (strain ATCC 33889 / DSM 1251)) protein is Small ribosomal subunit protein uS13.